The primary structure comprises 453 residues: GTPase Der (453 aa).

EngA-type G domains lie at 4–169 (PIVA…PPTT) and 177–352 (IKIA…EEHK). GTP contacts are provided by residues 10-17 (GRPNVGKS), 57-61 (DTGGL), 120-123 (NKCE), 183-190 (GRPNVGKS), 230-234 (DTAGI), and 295-298 (NKWD). Residues 353–438 (RRVSTSVINE…PIRLLWRSKK (86 aa)) form the KH-like domain.

This sequence belongs to the TRAFAC class TrmE-Era-EngA-EngB-Septin-like GTPase superfamily. EngA (Der) GTPase family. Associates with the 50S ribosomal subunit.

GTPase that plays an essential role in the late steps of ribosome biogenesis. The protein is GTPase Der of Trichormus variabilis (strain ATCC 29413 / PCC 7937) (Anabaena variabilis).